An 823-amino-acid chain; its full sequence is Lon protease (823 aa).

Residues 22 to 217 enclose the Lon N-terminal domain; the sequence is LPLLPVRDVV…KVNEHLNKEH (196 aa). Residue 369–376 participates in ATP binding; that stretch reads GPPGVGKT. The region spanning 605-786 is the Lon proteolytic domain; sequence KNEVGIVTGL…DDVLAVALET (182 aa). Residues S692 and K735 contribute to the active site. The tract at residues 788-823 is disordered; sequence PPPPPASEGKPAATVKAPPRRGIAAPRKGAMAGAKS.

It belongs to the peptidase S16 family. In terms of assembly, homohexamer. Organized in a ring with a central cavity.

It localises to the cytoplasm. The enzyme catalyses Hydrolysis of proteins in presence of ATP.. Its function is as follows. ATP-dependent serine protease that mediates the selective degradation of mutant and abnormal proteins as well as certain short-lived regulatory proteins. Required for cellular homeostasis and for survival from DNA damage and developmental changes induced by stress. Degrades polypeptides processively to yield small peptide fragments that are 5 to 10 amino acids long. Binds to DNA in a double-stranded, site-specific manner. The protein is Lon protease of Geobacter metallireducens (strain ATCC 53774 / DSM 7210 / GS-15).